Consider the following 826-residue polypeptide: Lethal(3)malignant brain tumor-like protein 1 (826 aa).

A Phosphoserine modification is found at S136. Disordered regions lie at residues 167-197 and 220-271; these read LEPP…SGDR and LLKP…RSQL. Residues 242 to 256 are compositionally biased toward basic and acidic residues; that stretch reads EAVKQGEGKDAEREP. 3 MBT repeats span residues 280 to 380, 388 to 487, and 496 to 591; these read WSWE…LQLP, FSWS…LTPP, and FCWE…LEPP. Residues 453 to 460 form an interaction with monomethylated and dimethylated peptides region; that stretch reads FDDWGDTY. The tract at residues 586–621 is disordered; sequence HPLEPPLRPRESSSVSPGGCPPLSHRSPPHTKTSKY. Residues 612-621 are compositionally biased toward basic residues; that stretch reads SPPHTKTSKY. The segment at 619 to 662 adopts a CCHHC-type zinc-finger fold; the sequence is SKYNFHHRKCPTPGCDGSGHVTGKFTAHHCLSGCPLAEKNQSRL. C628, C633, H646, and C652 together coordinate Zn(2+). The tract at residues 663–699 is disordered; the sequence is KAELSDSETAARKKNPSNLSPRKKPRHQGRIGRPPKY. The span at 683 to 699 shows a compositional bias: basic residues; that stretch reads PRKKPRHQGRIGRPPKY. The SAM domain occupies 757-821; the sequence is WTIEEVFGFV…YNAILMFKNT (65 aa).

Homodimer. Interacts with RB1/RB (when monomethylated at 'Lys-860'). Interacts with p53/TP53 (when monomethylated at 'Lys-382'). Interacts with CBX3, ETV6, KMT5A and VCP/p97. Ubiquitinated in a VCP/p97-dependent way following DNA damage, leading to its removal from DNA damage sites, promoting accessibility of H4K20me2 mark for DNA repair protein TP53BP1, which is then recruited to DNA damage sites. As to expression, highly expressed in brain, testis, eyes, and ES cells.

Its subcellular location is the nucleus. In terms of biological role, polycomb group (PcG) protein that specifically recognizes and binds mono- and dimethyllysine residues on target proteins, thereby acting as a 'reader' of a network of post-translational modifications. PcG proteins maintain the transcriptionally repressive state of genes: acts as a chromatin compaction factor by recognizing and binding mono- and dimethylated histone H1b/H1-4 at 'Lys-26' (H1bK26me1 and H1bK26me2) and histone H4 at 'Lys-20' (H4K20me1 and H4K20me2), leading to condense chromatin and repress transcription. Recognizes and binds p53/TP53 monomethylated at 'Lys-382', leading to repress p53/TP53-target genes. Also recognizes and binds RB1/RB monomethylated at 'Lys-860'. Participates in the ETV6-mediated repression. Probably plays a role in cell proliferation. Overexpression induces multinucleated cells, suggesting that it is required to accomplish normal mitosis. The protein is Lethal(3)malignant brain tumor-like protein 1 (L3mbtl1) of Mus musculus (Mouse).